The chain runs to 384 residues: Carbazole 1,9a-dioxygenase, terminal oxygenase component CarAa (384 aa).

Residues W29–I135 form the Rieske domain. Residues C69, H71, C90, and H93 each contribute to the [2Fe-2S] cluster site.

Homotrimer. Carbazole 1,9a-dioxygenase complex consists of a terminal oxygenase component CarAa, a ferredoxin reductase component CarAd and a ferredoxin component CarAc. [2Fe-2S] cluster is required as a cofactor.

It carries out the reaction 9H-carbazole + NADH + O2 + H(+) = 2'-aminobiphenyl-2,3-diol + NAD(+). The catalysed reaction is 9H-carbazole + NADPH + O2 + H(+) = 2'-aminobiphenyl-2,3-diol + NADP(+). Its function is as follows. Part of the multicomponent carbazole 1,9a-dioxygenase (CARDO), that converts carbazole (CAR) into 2-aminobiphenyl-2,3-diol. Catalyzes the dioxygenation at the angular (C-9a) and adjacent (C-1) positions of carbazole to yield a highly unstable cis-hydrodiol intermediate which is spontaneously converted to 2-aminobiphenyl-2,3-diol. It is also able to attack the angular position adjacent of hetero atom of heterocyclic aromatic compounds such as polychlorinated dibenzo-p-dioxin (DD) and dibenzofuran (DBF). It was also shown that CARDO has the ability to metabolize biphenyl and polycyclic aromatic hydrocarbons, such as naphthalene and phenanthrene. This chain is Carbazole 1,9a-dioxygenase, terminal oxygenase component CarAa (carAa), found in Metapseudomonas resinovorans (Pseudomonas resinovorans).